The sequence spans 82 residues: Putative defensin-like protein 134 (82 aa).

The first 26 residues, 1 to 26 (MEVRSLNLCFLLVLVLLMSPAPTAVA), serve as a signal peptide directing secretion. 4 cysteine pairs are disulfide-bonded: cysteine 32–cysteine 79, cysteine 42–cysteine 68, cysteine 47–cysteine 74, and cysteine 51–cysteine 76.

This sequence belongs to the DEFL family.

The protein localises to the secreted. The protein is Putative defensin-like protein 134 of Arabidopsis thaliana (Mouse-ear cress).